Consider the following 776-residue polypeptide: Transcription factor MYB3R-1 (776 aa).

The segment at M1–E41 is disordered. HTH myb-type domains lie at A30 to L81, N82 to I137, and N138 to L188. DNA-binding regions (H-T-H motif) lie at residues W58 to L81, W110 to L133, and W161 to V184. 3 disordered regions span residues S217–D253, F364–E384, and D401–H435. 3 stretches are compositionally biased toward polar residues: residues C240 to D253, F364 to D380, and G423 to A432. The Nuclear localization signal signature appears at K648–L655.

As to quaternary structure, component of a DREAM-like complex which modulates a variety of developmentally regulated genes and of the mitotic genes in proliferating and differentiated cells. As to expression, expressed ubiquitously at low levels. Expressed in roots, cotyledons, flowers and leaves, especially in vascular tissues.

The protein resides in the nucleus. In terms of biological role, transcription factor that binds 5'-AACGG-3' motifs in gene promoters. Transcription activator involved in the regulation of cytokinesis, probably via the activation of several G2/M phase-specific genes transcription (e.g. KNOLLE). Transcription repressor that regulates organ growth. Binds to the promoters of G2/M-specific genes and to E2F target genes to prevent their expression in post-mitotic cells and to restrict the time window of their expression in proliferating cells. Required for the maintenance of diploidy. This is Transcription factor MYB3R-1 from Arabidopsis thaliana (Mouse-ear cress).